The chain runs to 339 residues: GTP 3',8-cyclase (339 aa).

The 237-residue stretch at 13 to 249 (RYGRPLRDLR…GEVAQRHAFA (237 aa)) folds into the Radical SAM core domain. GTP is bound at residue Arg22. [4Fe-4S] cluster is bound by residues Cys29 and Cys33. S-adenosyl-L-methionine is bound at residue Tyr35. Residue Cys36 participates in [4Fe-4S] cluster binding. Residue Arg75 participates in GTP binding. Gly79 provides a ligand contact to S-adenosyl-L-methionine. GTP is bound at residue Thr106. Residue Ser130 participates in S-adenosyl-L-methionine binding. Residue Lys168 participates in GTP binding. Met202 provides a ligand contact to S-adenosyl-L-methionine. [4Fe-4S] cluster-binding residues include Cys266 and Cys269. A GTP-binding site is contributed by 271–273 (RAR). Residue Cys283 participates in [4Fe-4S] cluster binding.

It belongs to the radical SAM superfamily. MoaA family. As to quaternary structure, monomer and homodimer. [4Fe-4S] cluster serves as cofactor.

It carries out the reaction GTP + AH2 + S-adenosyl-L-methionine = (8S)-3',8-cyclo-7,8-dihydroguanosine 5'-triphosphate + 5'-deoxyadenosine + L-methionine + A + H(+). It functions in the pathway cofactor biosynthesis; molybdopterin biosynthesis. Functionally, catalyzes the cyclization of GTP to (8S)-3',8-cyclo-7,8-dihydroguanosine 5'-triphosphate. The polypeptide is GTP 3',8-cyclase (Xanthomonas campestris pv. campestris (strain 8004)).